The primary structure comprises 111 residues: Universal stress protein B (111 aa).

Residues 1-21 (MISTVSLFWALCVVCIVNMAR) traverse the membrane as a helical segment. Over 22 to 89 (YFSSLRALLV…IRRCERVRRQ (68 aa)) the chain is Cytoplasmic. The chain crosses the membrane as a helical span at residues 90–110 (FLLTSALCGLVVVSLIALMIW). A topological domain (periplasmic) is located at residue H111.

Belongs to the universal stress protein B family.

It localises to the cell inner membrane. This chain is Universal stress protein B (uspB), found in Salmonella choleraesuis (strain SC-B67).